The chain runs to 98 residues: NADH-ubiquinone oxidoreductase chain 4L (98 aa).

3 consecutive transmembrane segments (helical) span residues 2–22 (QMTM…LLMF), 26–46 (FMSS…LMSI), and 59–79 (FPLV…SLLV).

This sequence belongs to the complex I subunit 4L family. Core subunit of respiratory chain NADH dehydrogenase (Complex I) which is composed of 45 different subunits.

The protein resides in the mitochondrion inner membrane. It carries out the reaction a ubiquinone + NADH + 5 H(+)(in) = a ubiquinol + NAD(+) + 4 H(+)(out). Core subunit of the mitochondrial membrane respiratory chain NADH dehydrogenase (Complex I) which catalyzes electron transfer from NADH through the respiratory chain, using ubiquinone as an electron acceptor. Part of the enzyme membrane arm which is embedded in the lipid bilayer and involved in proton translocation. The sequence is that of NADH-ubiquinone oxidoreductase chain 4L (MT-ND4L) from Echinosorex gymnura (Moon rat).